We begin with the raw amino-acid sequence, 403 residues long: Semaphorin-like protein A39 (403 aa).

The signal sequence occupies residues 1 to 14 (MIPLLFILFYFANG). The 389-residue stretch at 15 to 403 (IEWHKFETSE…MPQMKKILKM (389 aa)) folds into the Sema domain.

The protein belongs to the semaphorin family. As to quaternary structure, interacts with host VESPR.

The protein resides in the secreted. In terms of biological role, acts as a semaphorin-like protein and binds to host plexin C1 receptor. May alter the movement of host plexin C1-expressing cells including dendritic cells, monocytes, or granulocytes in the proximity of infected cells. May also regulate host cell cytoskeleton of neighboring cells to improve viral infection. This chain is Semaphorin-like protein A39, found in Homo sapiens (Human).